Consider the following 253-residue polypeptide: Peptidase inhibitor R3HDML (253 aa).

Residues Met-1–Ala-23 form the signal peptide. A propeptide spanning residues Leu-24–Arg-56 is cleaved from the precursor. Asn-28 and Asn-120 each carry an N-linked (GlcNAc...) asparagine glycan. The 141-residue stretch at Leu-67–Tyr-207 folds into the SCP domain.

It belongs to the CRISP family.

The protein localises to the secreted. In terms of biological role, putative serine protease inhibitor. This is Peptidase inhibitor R3HDML (R3hdml) from Mus musculus (Mouse).